Reading from the N-terminus, the 616-residue chain is Dihydroxy-acid dehydratase (616 aa).

Position 81 (aspartate 81) interacts with Mg(2+). A [2Fe-2S] cluster-binding site is contributed by cysteine 122. Residues aspartate 123 and lysine 124 each coordinate Mg(2+). Position 124 is an N6-carboxylysine (lysine 124). A [2Fe-2S] cluster-binding site is contributed by cysteine 195. Glutamate 491 contributes to the Mg(2+) binding site. The active-site Proton acceptor is serine 517.

It belongs to the IlvD/Edd family. As to quaternary structure, homodimer. [2Fe-2S] cluster serves as cofactor. Mg(2+) is required as a cofactor.

It carries out the reaction (2R)-2,3-dihydroxy-3-methylbutanoate = 3-methyl-2-oxobutanoate + H2O. It catalyses the reaction (2R,3R)-2,3-dihydroxy-3-methylpentanoate = (S)-3-methyl-2-oxopentanoate + H2O. The protein operates within amino-acid biosynthesis; L-isoleucine biosynthesis; L-isoleucine from 2-oxobutanoate: step 3/4. It participates in amino-acid biosynthesis; L-valine biosynthesis; L-valine from pyruvate: step 3/4. Its function is as follows. Functions in the biosynthesis of branched-chain amino acids. Catalyzes the dehydration of (2R,3R)-2,3-dihydroxy-3-methylpentanoate (2,3-dihydroxy-3-methylvalerate) into 2-oxo-3-methylpentanoate (2-oxo-3-methylvalerate) and of (2R)-2,3-dihydroxy-3-methylbutanoate (2,3-dihydroxyisovalerate) into 2-oxo-3-methylbutanoate (2-oxoisovalerate), the penultimate precursor to L-isoleucine and L-valine, respectively. This chain is Dihydroxy-acid dehydratase, found in Escherichia coli O8 (strain IAI1).